The chain runs to 466 residues: Asparagine--tRNA ligase (466 aa).

It belongs to the class-II aminoacyl-tRNA synthetase family. As to quaternary structure, homodimer.

The protein localises to the cytoplasm. It carries out the reaction tRNA(Asn) + L-asparagine + ATP = L-asparaginyl-tRNA(Asn) + AMP + diphosphate + H(+). This is Asparagine--tRNA ligase from Buchnera aphidicola subsp. Schizaphis graminum (strain Sg).